A 90-amino-acid chain; its full sequence is Acylphosphatase (90 aa).

The region spanning 4–90 (RMYVKVYGIV…KGEFNNFDTY (87 aa)) is the Acylphosphatase-like domain. Catalysis depends on residues R19 and N37.

It belongs to the acylphosphatase family.

The catalysed reaction is an acyl phosphate + H2O = a carboxylate + phosphate + H(+). This chain is Acylphosphatase (acyP), found in Sulfurisphaera tokodaii (strain DSM 16993 / JCM 10545 / NBRC 100140 / 7) (Sulfolobus tokodaii).